Consider the following 397-residue polypeptide: Acetate kinase 1 (397 aa).

N8 is a Mg(2+) binding site. Position 15 (K15) interacts with ATP. R89 serves as a coordination point for substrate. D146 (proton donor/acceptor) is an active-site residue. ATP contacts are provided by residues 206–210 (HLGNG), 281–283 (DFR), and 329–333 (GVGEN). E380 contacts Mg(2+).

This sequence belongs to the acetokinase family. As to quaternary structure, homodimer. Mg(2+) is required as a cofactor. The cofactor is Mn(2+).

It localises to the cytoplasm. It carries out the reaction acetate + ATP = acetyl phosphate + ADP. It participates in metabolic intermediate biosynthesis; acetyl-CoA biosynthesis; acetyl-CoA from acetate: step 1/2. Its function is as follows. Catalyzes the formation of acetyl phosphate from acetate and ATP. Can also catalyze the reverse reaction. The polypeptide is Acetate kinase 1 (Listeria monocytogenes serotype 4b (strain F2365)).